We begin with the raw amino-acid sequence, 1224 residues long: MARAKLPRSPSEGKAGPGDTPAGAAAPEEPHGLSPLLPARGGGSVGSDVGQRVQVEFYVNENTFKERLKLFFIKNQRSSLRIRLFNFSLKLLTCLLYIVRVLLDNPDQGIGCWGCTKYNYTFNGSSSEFHWAPILWVERKMALWVIQVIVATISFLETMLIIYLSYKGNIWEQIFHVSFVLEMINTLPFIITVFWPPLRNLFIPVFLNCWLAKHALENMINDFHRAILRTQSAMFNQVLILFCTLLCLVFTGTCGIQHLERAGGNLNLLTSFYFCIVTFSTVGFGDVTPKIWPSQLLVVILICVTLVVLPLQFEELVYLWMERQKSGGNYSRHRARTEKHVVLCVSSLKIDLLMDFLNEFYAHPRLQDYYVVILCPSEMDVQVRRVLQIPLWSQRVIYLQGSALKDQDLMRAKMDNGEACFILSSRNEVDRTAADHQTILRAWAVKDFAPNCPLYVQILKPENKFHVKFADHVVCEEECKYAMLALNCICPATSTLITLLVHTSRGQEGQESPEQWQRTYGRCSGNEVYHIRMGDSKFFREYEGKSFTYAAFHAHKKYGVCLIGLKREENKSILLNPGPRHILAASDTCFYINITKEENSAFIFKQEEKQKRRGLAGQALYEGPSRLPVHSIIASMGTVAMDLQNTDCRPSQGGSGGDGTKLTLPTENGSGSRRPSIAPVLELADSSALLPCDLLSDQSEDEVTPSDDEGLSVVEYVKGYPPNSPYIGSSPTLCHLLPVKAPFCCLRLDKGCKHNSYEDAKAYGFKNKLIIVSAETAGNGLYNFIVPLRAYYRSRRELNPIVLLLDNKPDHHFLEAICCFPMVYYMEGSVDNLDSLLQCGIIYADNLVVVDKESTMSAEEDYMADAKTIVNVQTMFRLFPSLSITTELTHPSNMRFMQFRAKDSYSLALSKLEKQERENGSNLAFMFRLPFAAGRVFSISMLDTLLYQSFVKDYMITITRLLLGLDTTPGSGYLCAMKVTEDDLWIRTYGRLFQKLCSSSAEIPIGIYRTECHVFSEPHDVRAQSQISVNMEDCEDTREAKGPWGTRAASGSGSTHGRHGGSADPVEHPLLRRKSLQWARKLSRKSTKQAGKAPVATDWITQQRLSLYRRSERQELSELVKNRMKHLGLPTTGYEDVANLTASDVMNRVNLGYLQDEMNDHHQNTLSYVLINPPPDTRLEPNDIVYLIRSDPLAHVASSSQSRKSSCSNKLSSCNPETRDETQL.

Residues 1–37 (MARAKLPRSPSEGKAGPGDTPAGAAAPEEPHGLSPLL) are disordered. Over 1-79 (MARAKLPRSP…LFFIKNQRSS (79 aa)) the chain is Cytoplasmic. Residues 13–27 (GKAGPGDTPAGAAAP) are compositionally biased toward low complexity. The chain crosses the membrane as a helical span at residues 80–112 (LRIRLFNFSLKLLTCLLYIVRVLLDNPDQGIGC). At 113–139 (WGCTKYNYTFNGSSSEFHWAPILWVER) the chain is on the extracellular side. Residues asparagine 119 and asparagine 123 are each glycosylated (N-linked (GlcNAc...) asparagine). The helical transmembrane segment at 140 to 164 (KMALWVIQVIVATISFLETMLIIYL) threads the bilayer. Residues 165–178 (SYKGNIWEQIFHVS) lie on the Cytoplasmic side of the membrane. Residues 179 to 194 (FVLEMINTLPFIITVF) traverse the membrane as a helical segment. Topologically, residues 195–201 (WPPLRNL) are extracellular. A helical membrane pass occupies residues 202–219 (FIPVFLNCWLAKHALENM). At 220–232 (INDFHRAILRTQS) the chain is on the cytoplasmic side. Residues 233-260 (AMFNQVLILFCTLLCLVFTGTCGIQHLE) traverse the membrane as a helical segment. Topologically, residues 261–267 (RAGGNLN) are extracellular. The segment at residues 268-288 (LLTSFYFCIVTFSTVGFGDVT) is an intramembrane region (pore-forming). Valine 282 and glycine 283 together coordinate K(+). The Extracellular portion of the chain corresponds to 289–290 (PK). Residues 291–324 (IWPSQLLVVILICVTLVVLPLQFEELVYLWMERQ) traverse the membrane as a helical segment. Topologically, residues 325 to 1224 (KSGGNYSRHR…NPETRDETQL (900 aa)) are cytoplasmic. In terms of domain architecture, RCK N-terminal 1 spans 338–474 (EKHVVLCVSS…FHVKFADHVV (137 aa)). Residues leucine 499, histidine 502, serine 524, and asparagine 526 each coordinate Na(+). The interval 644 to 675 (QNTDCRPSQGGSGGDGTKLTLPTENGSGSRRP) is disordered. Polar residues predominate over residues 663–673 (TLPTENGSGSR). Positions 744 and 745 each coordinate Zn(2+). Arginine 747 and lysine 750 together coordinate K(+). Na(+) contacts are provided by arginine 747 and lysine 750. Positions 752 and 754 each coordinate Zn(2+). K(+) contacts are provided by asparagine 755, tyrosine 757, tyrosine 763, and glycine 764. Residue tyrosine 757 participates in Na(+) binding. Na(+) is bound at residue phenylalanine 765. The RCK N-terminal 2 domain occupies 767–907 (NKLIIVSAET…QFRAKDSYSL (141 aa)). Residues serine 773, leucine 804, aspartate 806, glycine 828, and aspartate 851 each contribute to the K(+) site. Disordered regions lie at residues 1038 to 1066 (REAK…ADPV) and 1198 to 1224 (SSSQ…ETQL). Composition is skewed to low complexity over residues 1045-1055 (GTRAASGSGST) and 1198-1215 (SSSQ…SSCN).

This sequence belongs to the potassium channel family. Calcium-activated (TC 1.A.1.3) subfamily. KCa4.1/KCNT1 sub-subfamily. Homotetramer; which constitutes the Na(+)-activated K(+) channel. Interacts with KCNT2; these heterodimer channels differ from the homomers in their unitary conductance, kinetic behavior, subcellular localization, and response to activation of protein kinase C. Interacts (via C-terminus) with FMR1; this interaction alters gating properties of KCNT1. Interacts with CRBN via its cytoplasmic C-terminus. In terms of processing, phosphorylated by protein kinase C. Phosphorylation of the C-terminal domain increases channel activity. Enriched in the brainstem and olfactory bulb and detected at significant levels in four different brain regions.

The protein localises to the cell membrane. The catalysed reaction is K(+)(in) = K(+)(out). Its activity is regulated as follows. Activated by high intracellular Na(+). In addition to activation by Na(+), is cooperatively activated by intracellular Cl(-) levels. Inhibited by Zn(2+). Activated upon stimulation of G-protein coupled receptors, such as CHRM1 and GRIA1. Functionally, sodium-activated K(+) channel. Acts as an important mediator of neuronal membrane excitability. Contributes to the delayed outward currents. Regulates neuronal bursting in sensory neurons. Contributes to synaptic development and plasticity. In Mus musculus (Mouse), this protein is Potassium channel subfamily T member 1 (Kcnt1).